We begin with the raw amino-acid sequence, 130 residues long: Small ribosomal subunit protein uS8 (130 aa).

Belongs to the universal ribosomal protein uS8 family. Part of the 30S ribosomal subunit.

In terms of biological role, one of the primary rRNA binding proteins, it binds directly to 16S rRNA central domain where it helps coordinate assembly of the platform of the 30S subunit. This chain is Small ribosomal subunit protein uS8, found in Methanotorris igneus (Methanococcus igneus).